The chain runs to 123 residues: WAP four-disulfide core domain protein 5 (123 aa).

Positions 1–24 are cleaved as a signal peptide; it reads MRTQSLLLLGALLAVGSQLPAVFG. WAP domains follow at residues 27 to 73 and 74 to 121; these read KGEK…CVPR and VSVK…RDPA. Intrachain disulfides connect Cys34–Cys62, Cys41–Cys66, Cys49–Cys61, Cys55–Cys70, Cys81–Cys109, Cys88–Cys113, Cys96–Cys108, and Cys102–Cys117.

It is found in the secreted. Putative acid-stable proteinase inhibitor. The protein is WAP four-disulfide core domain protein 5 (WFDC5) of Pan troglodytes (Chimpanzee).